A 259-amino-acid polypeptide reads, in one-letter code: UPF0246 protein NGO_0461 (259 aa).

It belongs to the UPF0246 family.

The sequence is that of UPF0246 protein NGO_0461 from Neisseria gonorrhoeae (strain ATCC 700825 / FA 1090).